Here is a 688-residue protein sequence, read N- to C-terminus: Soluble guanylate cyclase gcy-35 (688 aa).

His-105 contributes to the heme binding site. The stretch at 358–401 (LNQSRMSQVELNRTLEETTKKLKKMAQELEIEKQKTDELLCELM) forms a coiled coil. Residues 424-552 (TLLFTDIVTF…DTVNVANKME (129 aa)) form the Guanylate cyclase domain. Residues Asp-429 and Asp-473 each coordinate Mg(2+). Residues 644–688 (VENGNSAQNNHNNNNNTHHSGRKLMNGSSVDPGSHHIRSPTCTIS) form a disordered region. The span at 646–659 (NGNSAQNNHNNNNN) shows a compositional bias: low complexity.

It belongs to the adenylyl cyclase class-4/guanylyl cyclase family. In terms of assembly, heterodimer; heterodimerizes with gcy-36, and possibly with other soluble guanylate cyclases. Requires heme as cofactor. In terms of tissue distribution, expressed in URX, AQR and PQR neurons. Also expressed in ALN, SDQ and BDU neurons, and variably in AVM, PLM and PLN neurons, pharyngeal and body wall muscles, and the excretory cell.

The protein localises to the cytoplasm. Its subcellular location is the cell projection. It localises to the dendrite. It carries out the reaction GTP = 3',5'-cyclic GMP + diphosphate. Its activity is regulated as follows. Regulated by molecular oxygen, which binds to the heme binding site. Probably not activated by nitric oxide (NO). Functionally, plays a central role in social feeding behavior and oxygen sensation by synthesizing 3',5'-cyclic guanosine monophosphate (cGMP) from GTP. Oxygen, which binds to its heme-binding sites, probably regulates social behavior by modulating its activity. cGMP is a common second messenger in sensory transduction and is implicated in oxygen sensation. Indeed, C.elegans exhibits a strong behavioral preference for 5-12% oxygen, avoiding higher and lower oxygen levels; a higher level of oxygen inducing a naturally polymorphic social feeding behavior. Involved in avoidance of hyperoxia and for oxygen-induced aggregation and bordering, probably by mediating oxygen-sensing in URX, AQR and PQR sensory neurons. The polypeptide is Soluble guanylate cyclase gcy-35 (gcy-35) (Caenorhabditis elegans).